A 208-amino-acid chain; its full sequence is Large ribosomal subunit protein uL4 (208 aa).

A disordered region spans residues 47-84 (ARAARERSDVARTGKKFGRQKGGGTARHGDRRAPVFIG). A compositionally biased stretch (basic and acidic residues) spans 49 to 58 (AARERSDVAR).

It belongs to the universal ribosomal protein uL4 family. In terms of assembly, part of the 50S ribosomal subunit.

In terms of biological role, one of the primary rRNA binding proteins, this protein initially binds near the 5'-end of the 23S rRNA. It is important during the early stages of 50S assembly. It makes multiple contacts with different domains of the 23S rRNA in the assembled 50S subunit and ribosome. Forms part of the polypeptide exit tunnel. The sequence is that of Large ribosomal subunit protein uL4 from Rhizorhabdus wittichii (strain DSM 6014 / CCUG 31198 / JCM 15750 / NBRC 105917 / EY 4224 / RW1) (Sphingomonas wittichii).